A 276-amino-acid polypeptide reads, in one-letter code: NADPH-dependent 7-cyano-7-deazaguanine reductase (276 aa).

Position 83–85 (83–85 (IES)) interacts with substrate. Residue 85 to 86 (SK) coordinates NADPH. Residue Cys184 is the Thioimide intermediate of the active site. Asp191 (proton donor) is an active-site residue. 223 to 224 (HE) provides a ligand contact to substrate. Residue 252–253 (RG) participates in NADPH binding.

It belongs to the GTP cyclohydrolase I family. QueF type 2 subfamily. As to quaternary structure, homodimer.

It is found in the cytoplasm. The enzyme catalyses 7-aminomethyl-7-carbaguanine + 2 NADP(+) = 7-cyano-7-deazaguanine + 2 NADPH + 3 H(+). The protein operates within tRNA modification; tRNA-queuosine biosynthesis. Its function is as follows. Catalyzes the NADPH-dependent reduction of 7-cyano-7-deazaguanine (preQ0) to 7-aminomethyl-7-deazaguanine (preQ1). This chain is NADPH-dependent 7-cyano-7-deazaguanine reductase, found in Pseudomonas syringae pv. tomato (strain ATCC BAA-871 / DC3000).